Consider the following 197-residue polypeptide: Protein TIFY 9 (197 aa).

Positions 57-73 (STGNNSDSSAKSRSVPS) are enriched in polar residues. The interval 57 to 84 (STGNNSDSSAKSRSVPSTPREDQPQIPI) is disordered. The 35-residue stretch at 98 to 132 (LVSGTVPMTIFYNGSVSVFQVSRNKAGEIMKVANE) folds into the Tify domain. Positions 168–193 (PIARRKSLQRFLEKRKERLVSTSPYY) match the Jas motif. The short motif at 170 to 177 (ARRKSLQR) is the Nuclear localization signal element.

The protein belongs to the TIFY/JAZ family. Homo- and heterodimer. Interacts with MYC2, MYC3, MYC4, AFPH2/NINJA, TIFY10A/JAZ1, TIFY10B/JAZ2, TIFY6B/JAZ3, TIFY6A/JAZ4, TIFY11B/JAZ6, TIFY5A/JAZ8, TIFY7/JAZ9, TIFY3A/JAZ11 and TIFY3B/JAZ12. Isoform 1 and isoform 2 interact with COI1. Isoform 3 does not interact with COI1. Interacts with RHD6 and RSL1. In terms of processing, ubiquitinated. Targeted for degradation by the SCF(COI1) E3 ubiquitin ligase-proteasome pathway during jasmonate signaling.

The protein localises to the nucleus. Its function is as follows. Repressor of jasmonate (JA) responses that lacks the entire Jas domain and possesses severe JA insensitivity and resistance to JA-induced degradation. Acts as an endogenous repressor of JA signal output in JA-stimulated cells. Modulator of JA-controlled growth inhibition in response to wounding. In terms of biological role, repressor of jasmonate (JA) responses that lacks part of the Jas domain and possesses JA insensitivity and partial resistance to JA-induced degradation. Repressor of jasmonate (JA) responses. Interacts with and suppresses RHD6 and RSL1 transcription factor activities to negatively regulate jasmonate-stimulated root hair development. The sequence is that of Protein TIFY 9 (TIFY9) from Arabidopsis thaliana (Mouse-ear cress).